The chain runs to 121 residues: Basic phospholipase A2 daboxin P (121 aa).

Cystine bridges form between cysteine 26–cysteine 115, cysteine 28–cysteine 44, cysteine 43–cysteine 95, cysteine 49–cysteine 121, cysteine 50–cysteine 88, cysteine 57–cysteine 81, and cysteine 75–cysteine 86. The Ca(2+) site is built by tyrosine 27, glycine 29, and glycine 31. The active site involves histidine 47. A Ca(2+)-binding site is contributed by aspartate 48. Residue aspartate 89 is part of the active site.

Ca(2+) serves as cofactor. Expressed by the venom gland.

It localises to the secreted. It catalyses the reaction a 1,2-diacyl-sn-glycero-3-phosphocholine + H2O = a 1-acyl-sn-glycero-3-phosphocholine + a fatty acid + H(+). Its function is as follows. Snake venom phospholipase A2 (PLA2) that exhibits anticoagulant activity, probably by binding to factor X and its activated form factor Xa (F10). Shows no cytotoxicity. PLA2 catalyzes the calcium-dependent hydrolysis of the 2-acyl groups in 3-sn-phosphoglycerides. The sequence is that of Basic phospholipase A2 daboxin P from Daboia russelii (Russel's viper).